The primary structure comprises 346 residues: Dihydroorotase (346 aa).

H14 and H16 together coordinate Zn(2+). Substrate is bound by residues 16 to 18 (HLR) and N42. 3 residues coordinate Zn(2+): K100, H137, and H175. The residue at position 100 (K100) is an N6-carboxylysine. Position 137 (H137) interacts with substrate. L220 contributes to the substrate binding site. D248 contributes to the Zn(2+) binding site. D248 is a catalytic residue. Positions 252 and 264 each coordinate substrate.

It belongs to the metallo-dependent hydrolases superfamily. DHOase family. Class II DHOase subfamily. Homodimer. Zn(2+) serves as cofactor.

The enzyme catalyses (S)-dihydroorotate + H2O = N-carbamoyl-L-aspartate + H(+). It functions in the pathway pyrimidine metabolism; UMP biosynthesis via de novo pathway; (S)-dihydroorotate from bicarbonate: step 3/3. Functionally, catalyzes the reversible cyclization of carbamoyl aspartate to dihydroorotate. The protein is Dihydroorotase of Cereibacter sphaeroides (strain ATCC 17025 / ATH 2.4.3) (Rhodobacter sphaeroides).